Consider the following 599-residue polypeptide: BICD family-like cargo adapter 1 (599 aa).

The segment at 1–27 (MELPISFLSDSSRPAASSERGDQAALG) is disordered. The CC1 box motif lies at 76–80 (AARLG). The stretch at 80 to 341 (GKALLERNQD…WEAHCQVRSL (262 aa)) forms a coiled coil. The segment at 352–375 (DSAVSTDSSMDESSETSSAKDVPA) is disordered. Residues 405 to 536 (EDDGLEEQIK…LEAWQDDMHR (132 aa)) adopt a coiled-coil conformation.

The protein belongs to the BICDR family. In terms of assembly, part of a tripartite complex with dynein and dynactin, acts an adapter linking the dynein motor complex and dynactin. Interacts with KIF1C. Interacts with RAB6A and RAB6B; interaction is specific to Rab6.

It is found in the cytoplasm. Its subcellular location is the cytoskeleton. The protein resides in the microtubule organizing center. The protein localises to the centrosome. Its function is as follows. Acts as an adapter protein linking the dynein motor complex to various cargos and converts dynein from a non-processive to a highly processive motor in the presence of dynactin. Facilitates the interaction between dynein and dynactin and activates dynein processivity (the ability to move along a microtubule for a long distance without falling off the track). Predominantly recruits 2 dyneins, which increases both the force and speed of the microtubule motor. Component of secretory vesicle machinery in developing neurons that acts as a regulator of neurite outgrowth. Regulates the secretory vesicle transport by controlling the accumulation of Rab6-containing secretory vesicles in the pericentrosomal region restricting anterograde secretory transport during the early phase of neuronal differentiation, thereby inhibiting neuritogenesis. The sequence is that of BICD family-like cargo adapter 1 (bicdl1) from Xenopus tropicalis (Western clawed frog).